Here is a 221-residue protein sequence, read N- to C-terminus: High frequency lysogenization protein HflD homolog (221 aa).

It belongs to the HflD family.

It is found in the cytoplasm. It localises to the cell inner membrane. The sequence is that of High frequency lysogenization protein HflD homolog from Acidithiobacillus ferrooxidans (strain ATCC 23270 / DSM 14882 / CIP 104768 / NCIMB 8455) (Ferrobacillus ferrooxidans (strain ATCC 23270)).